We begin with the raw amino-acid sequence, 327 residues long: Phenylalanine--tRNA ligase alpha subunit (327 aa).

Residue Glu-252 coordinates Mg(2+).

The protein belongs to the class-II aminoacyl-tRNA synthetase family. Phe-tRNA synthetase alpha subunit type 1 subfamily. Tetramer of two alpha and two beta subunits. Requires Mg(2+) as cofactor.

Its subcellular location is the cytoplasm. It carries out the reaction tRNA(Phe) + L-phenylalanine + ATP = L-phenylalanyl-tRNA(Phe) + AMP + diphosphate + H(+). This is Phenylalanine--tRNA ligase alpha subunit from Shigella dysenteriae serotype 1 (strain Sd197).